A 235-amino-acid chain; its full sequence is Probable transcriptional regulatory protein Cla_1081 (235 aa).

Belongs to the TACO1 family.

Its subcellular location is the cytoplasm. The protein is Probable transcriptional regulatory protein Cla_1081 of Campylobacter lari (strain RM2100 / D67 / ATCC BAA-1060).